A 600-amino-acid chain; its full sequence is DNA mismatch repair protein MutL (600 aa).

A disordered region spans residues 348 to 375; that stretch reads QPQAQRPQTAWSAETSPFRPYQPTTGFS. The span at 349 to 362 shows a compositional bias: polar residues; that stretch reads PQAQRPQTAWSAET.

Belongs to the DNA mismatch repair MutL/HexB family.

Functionally, this protein is involved in the repair of mismatches in DNA. It is required for dam-dependent methyl-directed DNA mismatch repair. May act as a 'molecular matchmaker', a protein that promotes the formation of a stable complex between two or more DNA-binding proteins in an ATP-dependent manner without itself being part of a final effector complex. In Rhizobium leguminosarum bv. trifolii (strain WSM2304), this protein is DNA mismatch repair protein MutL.